The primary structure comprises 436 residues: ATP-dependent RNA helicase RhlB (436 aa).

The Q motif signature appears at 9 to 37 (QKFADFPLHKEVHQALNEAGFEFCTPIQA). Positions 40–219 (LPILLEKKDI…YDHMNEPEKV (180 aa)) constitute a Helicase ATP-binding domain. An ATP-binding site is contributed by 53-60 (AQTGTGKT). The short motif at 165–168 (DEAD) is the DEAD box element. In terms of domain architecture, Helicase C-terminal spans 243–390 (KMPLLLSLLE…VTSYDSDALL (148 aa)). The disordered stretch occupies residues 392-436 (DIPPPVRIHRKPSTHTRNTRDRSSGRPQGGQRNGPRRHDKTRRHS). The span at 425–436 (GPRRHDKTRRHS) shows a compositional bias: basic residues.

It belongs to the DEAD box helicase family. RhlB subfamily. Component of the RNA degradosome, which is a multiprotein complex involved in RNA processing and mRNA degradation.

The protein localises to the cytoplasm. It carries out the reaction ATP + H2O = ADP + phosphate + H(+). DEAD-box RNA helicase involved in RNA degradation. Has RNA-dependent ATPase activity and unwinds double-stranded RNA. The sequence is that of ATP-dependent RNA helicase RhlB from Shewanella pealeana (strain ATCC 700345 / ANG-SQ1).